Consider the following 461-residue polypeptide: Asparagine--tRNA ligase (461 aa).

Belongs to the class-II aminoacyl-tRNA synthetase family. In terms of assembly, homodimer.

The protein resides in the cytoplasm. It catalyses the reaction tRNA(Asn) + L-asparagine + ATP = L-asparaginyl-tRNA(Asn) + AMP + diphosphate + H(+). The protein is Asparagine--tRNA ligase of Geobacter sulfurreducens (strain ATCC 51573 / DSM 12127 / PCA).